A 424-amino-acid chain; its full sequence is GTPase Obg (424 aa).

The 160-residue stretch at 1 to 160 folds into the Obg domain; that stretch reads MFDRVEINIK…YDLILELKLI (160 aa). In terms of domain architecture, OBG-type G spans 161–328; sequence ADVAIIGYPN…LLAKVAEKLD (168 aa). GTP contacts are provided by residues 167–174, 192–196, 213–216, 280–283, and 309–311; these read GYPNVGKS, FTTLS, EVPG, NKID, and SAL. Mg(2+)-binding residues include Ser174 and Thr194. The 76-residue stretch at 349 to 424 folds into the OCT domain; sequence PAPKGKMGFR…IITGRMEWYL (76 aa).

It belongs to the TRAFAC class OBG-HflX-like GTPase superfamily. OBG GTPase family. Monomer. Mg(2+) is required as a cofactor.

Its subcellular location is the cytoplasm. Functionally, an essential GTPase which binds GTP, GDP and possibly (p)ppGpp with moderate affinity, with high nucleotide exchange rates and a fairly low GTP hydrolysis rate. Plays a role in control of the cell cycle, stress response, ribosome biogenesis and in those bacteria that undergo differentiation, in morphogenesis control. The protein is GTPase Obg of Dehalococcoides mccartyi (strain ATCC BAA-2100 / JCM 16839 / KCTC 5957 / BAV1).